The primary structure comprises 184 residues: Ribosome-recycling factor (184 aa).

The protein belongs to the RRF family.

The protein localises to the cytoplasm. Responsible for the release of ribosomes from messenger RNA at the termination of protein biosynthesis. May increase the efficiency of translation by recycling ribosomes from one round of translation to another. The sequence is that of Ribosome-recycling factor from Clostridium botulinum (strain Langeland / NCTC 10281 / Type F).